The sequence spans 505 residues: Trans-cinnamate 4-monooxygenase (505 aa).

A helical transmembrane segment spans residues 3 to 23 (LLLLEKTLLGLFIAAITAIAI). (E)-cinnamate is bound by residues 213 to 218 (RSRLAQ) and alanine 306. Cysteine 447 provides a ligand contact to heme.

This sequence belongs to the cytochrome P450 family. Heme serves as cofactor.

It is found in the membrane. The enzyme catalyses (E)-cinnamate + reduced [NADPH--hemoprotein reductase] + O2 = (E)-4-coumarate + oxidized [NADPH--hemoprotein reductase] + H2O + H(+). It participates in phenylpropanoid metabolism; trans-4-coumarate biosynthesis; trans-4-coumarate from trans-cinnamate: step 1/1. In terms of biological role, catalyzes the first oxidative step of the phenylpropanoid pathway in higher plants by transforming trans-cinnamate into p-coumarate. The compounds formed by this pathway are essential components for lignification, pollination, and defense against ultraviolet light, predators and pathogens. This Glycyrrhiza echinata (Licorice) protein is Trans-cinnamate 4-monooxygenase (CYP73A14).